The following is a 197-amino-acid chain: Imidazoleglycerol-phosphate dehydratase (197 aa).

It belongs to the imidazoleglycerol-phosphate dehydratase family.

It is found in the cytoplasm. It catalyses the reaction D-erythro-1-(imidazol-4-yl)glycerol 3-phosphate = 3-(imidazol-4-yl)-2-oxopropyl phosphate + H2O. Its pathway is amino-acid biosynthesis; L-histidine biosynthesis; L-histidine from 5-phospho-alpha-D-ribose 1-diphosphate: step 6/9. The chain is Imidazoleglycerol-phosphate dehydratase from Pseudomonas entomophila (strain L48).